The following is a 559-amino-acid chain: Membrane protein insertase YidC (559 aa).

The chain crosses the membrane as a helical span at residues Thr6–His26. Residues Gly34 to Pro80 form a disordered region. A compositionally biased stretch (low complexity) spans Ala42–Pro80. The next 4 membrane-spanning stretches (helical) occupy residues Leu367–Tyr387, Leu441–Val461, Pro480–Pro500, and Val510–Val530.

Belongs to the OXA1/ALB3/YidC family. Type 1 subfamily. Interacts with the Sec translocase complex via SecD. Specifically interacts with transmembrane segments of nascent integral membrane proteins during membrane integration.

Its subcellular location is the cell inner membrane. In terms of biological role, required for the insertion and/or proper folding and/or complex formation of integral membrane proteins into the membrane. Involved in integration of membrane proteins that insert both dependently and independently of the Sec translocase complex, as well as at least some lipoproteins. Aids folding of multispanning membrane proteins. This is Membrane protein insertase YidC from Bordetella avium (strain 197N).